Consider the following 146-residue polypeptide: Anti-sigma F factor (146 aa).

The protein belongs to the anti-sigma-factor family.

The enzyme catalyses L-seryl-[protein] + ATP = O-phospho-L-seryl-[protein] + ADP + H(+). It carries out the reaction L-threonyl-[protein] + ATP = O-phospho-L-threonyl-[protein] + ADP + H(+). Binds to sigma F and blocks its ability to form an RNA polymerase holoenzyme (E-sigma F). Phosphorylates SpoIIAA on a serine residue. This phosphorylation may enable SpoIIAA to act as an anti-anti-sigma factor that counteracts SpoIIAB and thus releases sigma F from inhibition. The sequence is that of Anti-sigma F factor from Bacillus cytotoxicus (strain DSM 22905 / CIP 110041 / 391-98 / NVH 391-98).